A 253-amino-acid chain; its full sequence is Acidic endochitinase Q (253 aa).

Residues 1 to 24 (MEFSGSPMALFCCVFFLFLTGSLA) form the signal peptide. E92 serves as the catalytic Proton donor. C212 and C244 form a disulfide bridge.

This sequence belongs to the glycosyl hydrolase 19 family. Chitinase class I subfamily.

Its subcellular location is the secreted. It catalyses the reaction Random endo-hydrolysis of N-acetyl-beta-D-glucosaminide (1-&gt;4)-beta-linkages in chitin and chitodextrins.. Its function is as follows. Defense against chitin-containing fungal pathogens. In Nicotiana tabacum (Common tobacco), this protein is Acidic endochitinase Q.